The primary structure comprises 246 residues: MAVTMRQMLEAGVHFGHQTRFWNPKMAPFIFGHRNKIHIINLEKTLPMFTDAQKYVRQLAANRGTILFVGTKRQSRDTIAQEAQRAGMPYVNARWLGGMMTNFKTLKVSIKRLKDMEAAVESGETEKMSKKEALLFEREIAKLQKSIGGVKDMGGIPDAIFVVDVGYHKIAVTEANKLGVPVIAVVDTNHSPEGVDYVIPGNDDSSKAVALYAEGVADAILEGRANAVNEVVQAARGDDEYVEENA.

It belongs to the universal ribosomal protein uS2 family.

The sequence is that of Small ribosomal subunit protein uS2 from Burkholderia cenocepacia (strain HI2424).